The chain runs to 327 residues: Probable cell division protein WhiA (327 aa).

The H-T-H motif DNA-binding region spans 275–308 (SLEELGRLADPPMTKDAVAGRIRRLLSMADRKAK). The tract at residues 304–327 (DRKAKQDGIPDTESAVTPDLLEDA) is disordered.

Belongs to the WhiA family.

In terms of biological role, involved in cell division and chromosome segregation. This chain is Probable cell division protein WhiA, found in Mycobacterium sp. (strain MCS).